The following is a 1220-amino-acid chain: Diacylglycerol kinase delta (1220 aa).

A disordered region spans residues 1-47 (MAAAAGAPPPGPPQPPPPPPPEESSDSEPEAEPGSPQKLIRKVSTSG). Residues 1 to 52 (MAAAAGAPPPGPPQPPPPPPPEESSDSEPEAEPGSPQKLIRKVSTSGQIRQK) are regulates association with membranes. A compositionally biased stretch (pro residues) spans 7 to 22 (APPPGPPQPPPPPPPE). One can recognise a PH domain in the interval 53–146 (TILKEGMLTK…WIAALKTVQN (94 aa)). 2 Phorbol-ester/DAG-type zinc fingers span residues 163 to 213 (MHNW…TSNC) and 235 to 286 (PHQW…VMKC). One can recognise a DAGKc domain in the interval 317–451 (SCTSPLLVFV…MLDRWSVMAY (135 aa)). Residues 554-584 (DDESQASSSLSNPPPTIAEEAEDGDGSGNIC) form a disordered region. The SAM domain occupies 1151-1214 (WGTEEVAAWL…LCGIKELSRS (64 aa)).

It belongs to the eukaryotic diacylglycerol kinase family. In terms of assembly, homooligomer. Monomer. Interacts with AP2A2; regulates clathrin-dependent endocytosis. In terms of tissue distribution, widely expressed.

The protein localises to the cell membrane. It is found in the membrane. Its subcellular location is the clathrin-coated pit. It localises to the cytoplasm. It carries out the reaction a 1,2-diacyl-sn-glycerol + ATP = a 1,2-diacyl-sn-glycero-3-phosphate + ADP + H(+). The catalysed reaction is 1,2-di-(9Z-octadecenoyl)-sn-glycerol + ATP = 1,2-di-(9Z-octadecenoyl)-sn-glycero-3-phosphate + ADP + H(+). It catalyses the reaction 1-octadecanoyl-2-(5Z,8Z,11Z,14Z-eicosatetraenoyl)-sn-glycerol + ATP = 1-octadecanoyl-2-(5Z,8Z,11Z,14Z-eicosatetraenoyl)-sn-glycero-3-phosphate + ADP + H(+). The protein operates within lipid metabolism; glycerolipid metabolism. Its function is as follows. Diacylglycerol kinase that converts diacylglycerol/DAG into phosphatidic acid/phosphatidate/PA and regulates the respective levels of these two bioactive lipids. Thereby, acts as a central switch between the signaling pathways activated by these second messengers with different cellular targets and opposite effects in numerous biological processes. By controlling the levels of diacylglycerol, regulates for instance the PKC and EGF receptor signaling pathways and plays a crucial role during development. May also regulate clathrin-dependent endocytosis. The polypeptide is Diacylglycerol kinase delta (Mus musculus (Mouse)).